Reading from the N-terminus, the 359-residue chain is Quinolinate synthase (359 aa).

Residues His-81 and Ser-99 each contribute to the iminosuccinate site. Cys-144 is a [4Fe-4S] cluster binding site. Iminosuccinate contacts are provided by residues 170-172 (YVN) and Ser-187. [4Fe-4S] cluster is bound at residue Cys-229. Residues 255 to 257 (HPE) and Thr-272 contribute to the iminosuccinate site. Cys-315 serves as a coordination point for [4Fe-4S] cluster.

Belongs to the quinolinate synthase family. Type 2 subfamily. [4Fe-4S] cluster is required as a cofactor.

The protein localises to the cytoplasm. The catalysed reaction is iminosuccinate + dihydroxyacetone phosphate = quinolinate + phosphate + 2 H2O + H(+). Its pathway is cofactor biosynthesis; NAD(+) biosynthesis; quinolinate from iminoaspartate: step 1/1. Functionally, catalyzes the condensation of iminoaspartate with dihydroxyacetone phosphate to form quinolinate. This chain is Quinolinate synthase, found in Sinorhizobium fredii (strain NBRC 101917 / NGR234).